The following is a 1067-amino-acid chain: MPYHLPVLLNPLLNAIFNCPSPKTSSLKQMFSRLDDERFFILVPSTETLLQFQDLESGLELAELCYHYDFVASHIVVIKDPTKDVPDQRSIYNTDFTTLNGRKLSIRYRNSTIVTGDGFTERRKITIKEINLLPTFNDYLKGSNYTPILHISMPLCGDLVPLDELQVFSKVAGNKYSKQEQAPLPFDEEQKKVLYFEQRIQSISDVAERVALTFHLTKARIKKAISVIGIRTEWLNTRDSIRQIISLDKRLNHLEDLDAMIYDYVELKLFTDIQQQLSEIVEDQELEHRFDFKALRSISLNQVPTNFYPKDEKSFSLASVVELEKSVNDALEYLKSIDLKTTHSGKLEVLSTTMRLLSREINGISTDADTLLSLFVLLICRSQVTGLVRTLTYLTNFEISETSIKFGLQGYVLSTFEAALSFFHQDTVDSLTKKCASNKKIWASIQKHSKVEAELLSSNLRIRTDSGESLLSICIQSHNNEVLTTLLANFESEFPLEDILDDRDFALSTLLIQALQVQNSQAAAILSEIILKSCTESEVRSYLNSPNLHNRITAHYIMQDISLLESVGRYFNWEHKDINGHTPLFAVFRSYDAVNYDEIVTKVLDQVVKWYANNNKPFNFKIHEDPKGNTLLHVMKSGIESLLKLPDVNVNKPDSKGLTPLMIYSRYNRITNIETIMKDERLLCDLVQQPLVMTSLDFTKNPKVTKTILDATFNREPVVIHSLRFEERKWKIGIFSEGIFKKYSLDLIQYYLRYLKIMYPCSFHPVQLLTNELRLLGIYGVPGVLRLQSYHTFKKLDMLFSYVNTRGKLWLGKDEEELKVLLDVPTPYLSESERFIKLEPEEINGIQTFLKYNLAEFQKLRNCLIILKKLAIVQQIKHRDVITMRNSFLSLGNQMSQKGVAKSFENTNCAWSYDLSYYEFTRNLEYLEHSVVTLLNNFESLLAKTTLWWKHFGELMELKKEWKKNFPNDKAPPSSANRNFIDTYIEGKRSKFRNKLSNQLKMSSLNLKKIGGEIKTTHESIAVGINLFIEFKEQFYHDHIVKSIVDQRIRENKQIMQQLIDTMKGHV.

Residues 280–432 (IVEDQELEHR…FHQDTVDSLT (153 aa)) form the VPS9 domain.

Belongs to the UPF0507 family.

The chain is UPF0507 protein KLLA0D01133g from Kluyveromyces lactis (strain ATCC 8585 / CBS 2359 / DSM 70799 / NBRC 1267 / NRRL Y-1140 / WM37) (Yeast).